The chain runs to 154 residues: Ferredoxin C 1, chloroplastic (154 aa).

Residues 1 to 56 constitute a chloroplast transit peptide; sequence MATLPLPTQTSTISLPKPYLSNSFSFPLRNATLSTTTNRRNFLTTGRIIARAYKVV. Residues 57–142 form the 2Fe-2S ferredoxin-type domain; it reads VEHDGKTTEL…DCHIKMIPEE (86 aa). Residues Cys89, Cys94, Cys97, and Cys126 each contribute to the [2Fe-2S] cluster site.

Belongs to the 2Fe2S plant-type ferredoxin family. It depends on [2Fe-2S] cluster as a cofactor.

The protein resides in the plastid. The protein localises to the chloroplast. Its function is as follows. Ferredoxins are iron-sulfur proteins that transfer electrons in a wide variety of metabolic reactions. Mediates alternative electron partitioning in conditions of acceptor limitation at photosystem I. Accepts electrons from photosystem I (PSI) and is capable of electron transfer with FNR, but cannot support photoreduction of NADP(+). The polypeptide is Ferredoxin C 1, chloroplastic (Arabidopsis thaliana (Mouse-ear cress)).